The sequence spans 60 residues: MAGLGVTELLIILAIVIVLFGASRIGDLGGAMGRGIREFRRGVRDEDATAPTDASKNESK.

A helical membrane pass occupies residues 1–21 (MAGLGVTELLIILAIVIVLFG).

The protein belongs to the TatA/E family. In terms of assembly, forms a complex with TatC.

It is found in the cell membrane. Part of the twin-arginine translocation (Tat) system that transports large folded proteins containing a characteristic twin-arginine motif in their signal peptide across membranes. TatA could form the protein-conducting channel of the Tat system. In Herpetosiphon aurantiacus (strain ATCC 23779 / DSM 785 / 114-95), this protein is Sec-independent protein translocase protein TatA.